The primary structure comprises 424 residues: Dihydroorotase (424 aa).

Zn(2+) is bound by residues H61 and H63. Substrate contacts are provided by residues 63–65 and N95; that span reads HLR. The Zn(2+) site is built by D153, H180, and H233. N279 is a binding site for substrate. D306 provides a ligand contact to Zn(2+). D306 is an active-site residue. H310 provides a ligand contact to substrate.

Belongs to the metallo-dependent hydrolases superfamily. DHOase family. Class I DHOase subfamily. Requires Zn(2+) as cofactor.

The enzyme catalyses (S)-dihydroorotate + H2O = N-carbamoyl-L-aspartate + H(+). It functions in the pathway pyrimidine metabolism; UMP biosynthesis via de novo pathway; (S)-dihydroorotate from bicarbonate: step 3/3. Catalyzes the reversible cyclization of carbamoyl aspartate to dihydroorotate. In Citrifermentans bemidjiense (strain ATCC BAA-1014 / DSM 16622 / JCM 12645 / Bem) (Geobacter bemidjiensis), this protein is Dihydroorotase.